Here is a 500-residue protein sequence, read N- to C-terminus: Oogenesin-3 (500 aa).

One copy of the LRR 1; degenerate repeat lies at 116 to 143 (RCKLRVLKWRDEQHDFCGIWPGSHEAED). Residues 198 to 222 (HLLCRKLVIETLTKDTVIEIFKIVN) form an LRR 2; degenerate repeat. One copy of the LRR 3; degenerate repeat lies at 223 to 248 (ADCIQELELYSLCLEDLAFLNPYLRQ). One copy of the LRR 4; degenerate repeat lies at 249–285 (MDNLLELTLDHVTDSLSMGDSEMCEEEMITLVSQLPT). LRR repeat units follow at residues 286–311 (FPCL…LRCL), 312–343 (KKPL…FELK), 344–367 (CLYL…LESV), 368–395 (RHTL…ALSQ), and 396–420 (CSHL…LLQH).

The protein belongs to the PRAME family. In terms of tissue distribution, expressed in ovary, specifically in oocytes. Detected in follicles with two layers of granulosa cells, and are present in early as well as large antral follicles.

This is Oogenesin-3 from Mus musculus (Mouse).